A 396-amino-acid chain; its full sequence is 8-amino-7-oxononanoate synthase (396 aa).

Arginine 19 serves as a coordination point for substrate. A pyridoxal 5'-phosphate-binding site is contributed by 106-107 (GY). Histidine 131 contacts substrate. Pyridoxal 5'-phosphate-binding residues include serine 176, histidine 204, and threonine 233. Lysine 236 is modified (N6-(pyridoxal phosphate)lysine). Threonine 350 contacts substrate.

This sequence belongs to the class-II pyridoxal-phosphate-dependent aminotransferase family. BioF subfamily. Homodimer. The cofactor is pyridoxal 5'-phosphate.

The enzyme catalyses 6-carboxyhexanoyl-[ACP] + L-alanine + H(+) = (8S)-8-amino-7-oxononanoate + holo-[ACP] + CO2. Its pathway is cofactor biosynthesis; biotin biosynthesis. Its function is as follows. Catalyzes the decarboxylative condensation of pimeloyl-[acyl-carrier protein] and L-alanine to produce 8-amino-7-oxononanoate (AON), [acyl-carrier protein], and carbon dioxide. The polypeptide is 8-amino-7-oxononanoate synthase (Pseudomonas syringae pv. syringae (strain B728a)).